We begin with the raw amino-acid sequence, 42 residues long: Statherin (42 aa).

A hydroxyapatite-binding; inhibits crystal growth region spans residues 1–6; that stretch reads DSSEEK. 2 positions are modified to phosphoserine: Ser2 and Ser3. The interval 18–42 is disordered; that stretch reads RYGPYQPFVPPPLYPQPYQPYQPQY. Residues 18–42 form a hydrophobic; inhibits precipitation of calcium phosphate salts region; the sequence is RYGPYQPFVPPPLYPQPYQPYQPQY. The span at 24–42 shows a compositional bias: pro residues; sequence PFVPPPLYPQPYQPYQPQY.

Belongs to the histatin/statherin family. In terms of tissue distribution, secreted by parotid and submandibular glands.

The protein localises to the secreted. Functionally, salivary protein that stabilizes saliva supersaturated with calcium salts by inhibiting the precipitation of calcium phosphate salts. It also modulates hydroxyapatite crystal formation on the tooth surface. This Macaca arctoides (Stump-tailed macaque) protein is Statherin (STATH).